The primary structure comprises 449 residues: Bifunctional F420 biosynthesis protein FbiB (449 aa).

Positions 1-245 are coenzyme F420:L-glutamate ligase; the sequence is MSPAGEHGTA…PGTEDLFWLG (245 aa). GTP-binding positions include 21–24, Ser-51, and Lys-56; that span reads LPEF. An a divalent metal cation-binding site is contributed by Asp-110. Asn-113 is a GTP binding site. Asp-151 and Thr-152 together coordinate a divalent metal cation. The dehydro-coenzyme F420-0 reductase stretch occupies residues 246-449; sequence TAEAIELGRR…ADPGDLLIRK (204 aa). FMN is bound by residues 261–265 and Ala-289; that span reads RRSVR. Asp-321 lines the coenzyme F420-(gamma-Glu)n pocket. 2 residues coordinate FMN: Gly-400 and Arg-437.

The protein in the N-terminal section; belongs to the CofE family. Requires Mg(2+) as cofactor. The cofactor is Mn(2+). It depends on K(+) as a cofactor.

It carries out the reaction oxidized coenzyme F420-0 + GTP + L-glutamate = oxidized coenzyme F420-1 + GDP + phosphate + H(+). The catalysed reaction is oxidized coenzyme F420-1 + GTP + L-glutamate = oxidized coenzyme F420-2 + GDP + phosphate + H(+). The enzyme catalyses oxidized coenzyme F420-(gamma-L-Glu)(n) + GTP + L-glutamate = oxidized coenzyme F420-(gamma-L-Glu)(n+1) + GDP + phosphate + H(+). It catalyses the reaction oxidized coenzyme F420-0 + FMN + H(+) = dehydro coenzyme F420-0 + FMNH2. The protein operates within cofactor biosynthesis; coenzyme F420 biosynthesis. Functionally, bifunctional enzyme that catalyzes the GTP-dependent successive addition of multiple gamma-linked L-glutamates to the L-lactyl phosphodiester of 7,8-didemethyl-8-hydroxy-5-deazariboflavin (F420-0) to form polyglutamated F420 derivatives, and the FMNH2-dependent reduction of dehydro-F420-0 to form F420-0. This is Bifunctional F420 biosynthesis protein FbiB from Mycobacterium avium (strain 104).